A 310-amino-acid polypeptide reads, in one-letter code: UPF0761 membrane protein VF_0100 (310 aa).

6 helical membrane-spanning segments follow: residues 34–54 (YMAY…LSVL), 97–117 (MTAV…SSID), 136–156 (FSLY…SLAA), 178–198 (LLGW…YLLV), 207–227 (HALI…VGFA), and 242–262 (ALAA…IVLI).

The protein belongs to the UPF0761 family.

The protein localises to the cell inner membrane. This is UPF0761 membrane protein VF_0100 from Aliivibrio fischeri (strain ATCC 700601 / ES114) (Vibrio fischeri).